The following is a 223-amino-acid chain: Deoxyribose-phosphate aldolase (223 aa).

The active-site Proton donor/acceptor is aspartate 89. Catalysis depends on lysine 152, which acts as the Schiff-base intermediate with acetaldehyde. The active-site Proton donor/acceptor is lysine 181.

The protein belongs to the DeoC/FbaB aldolase family. DeoC type 1 subfamily.

It localises to the cytoplasm. It catalyses the reaction 2-deoxy-D-ribose 5-phosphate = D-glyceraldehyde 3-phosphate + acetaldehyde. It participates in carbohydrate degradation; 2-deoxy-D-ribose 1-phosphate degradation; D-glyceraldehyde 3-phosphate and acetaldehyde from 2-deoxy-alpha-D-ribose 1-phosphate: step 2/2. Its function is as follows. Catalyzes a reversible aldol reaction between acetaldehyde and D-glyceraldehyde 3-phosphate to generate 2-deoxy-D-ribose 5-phosphate. This chain is Deoxyribose-phosphate aldolase, found in Listeria monocytogenes serotype 4a (strain HCC23).